The chain runs to 174 residues: Shikimate kinase (174 aa).

Position 15-20 (Gly-15–Thr-20) interacts with ATP. Position 19 (Ser-19) interacts with Mg(2+). Residues Asp-37, Arg-61, and Gly-82 each contribute to the substrate site. Arg-120 serves as a coordination point for ATP. Arg-138 provides a ligand contact to substrate.

This sequence belongs to the shikimate kinase family. Monomer. Mg(2+) serves as cofactor.

The protein localises to the cytoplasm. The enzyme catalyses shikimate + ATP = 3-phosphoshikimate + ADP + H(+). It functions in the pathway metabolic intermediate biosynthesis; chorismate biosynthesis; chorismate from D-erythrose 4-phosphate and phosphoenolpyruvate: step 5/7. In terms of biological role, catalyzes the specific phosphorylation of the 3-hydroxyl group of shikimic acid using ATP as a cosubstrate. This is Shikimate kinase from Staphylococcus aureus (strain NCTC 8325 / PS 47).